A 269-amino-acid polypeptide reads, in one-letter code: MPRPRKRFAQHWLKSQAVLRQIIAAAKIQGCDRILEIGPGRGVLTRELLAQAQSVVSVELDRDLCKSLRHTFNDQENFTLLELDFLNLDVAAELTEPLPNKVVANIPYNITSPILSKLLGRIDAPAQPVYETVVLLIQKEVADRLVAEPGSKIFNGLSVRSQYLADCELICPVPASAFKPAPKVESAVVRLTPRPYPQPVQNPQWLSTLLKVGFSSRRKMLRNNLKSLVDRDQLSECLNTLNISLQARAEDLSVTQWIALSDSVHPSQV.

Positions 11, 13, 38, 59, 84, and 105 each coordinate S-adenosyl-L-methionine.

The protein belongs to the class I-like SAM-binding methyltransferase superfamily. rRNA adenine N(6)-methyltransferase family. RsmA subfamily.

It localises to the cytoplasm. It catalyses the reaction adenosine(1518)/adenosine(1519) in 16S rRNA + 4 S-adenosyl-L-methionine = N(6)-dimethyladenosine(1518)/N(6)-dimethyladenosine(1519) in 16S rRNA + 4 S-adenosyl-L-homocysteine + 4 H(+). Specifically dimethylates two adjacent adenosines (A1518 and A1519) in the loop of a conserved hairpin near the 3'-end of 16S rRNA in the 30S particle. May play a critical role in biogenesis of 30S subunits. The sequence is that of Ribosomal RNA small subunit methyltransferase A from Acaryochloris marina (strain MBIC 11017).